The chain runs to 148 residues: Large ribosomal subunit protein bL9 (148 aa).

It belongs to the bacterial ribosomal protein bL9 family.

Binds to the 23S rRNA. This chain is Large ribosomal subunit protein bL9, found in Bacillus mycoides (strain KBAB4) (Bacillus weihenstephanensis).